Here is a 250-residue protein sequence, read N- to C-terminus: Histone H1.2 (250 aa).

The segment covering 1–11 (MSDSAVATSAS) has biased composition (polar residues). Disordered stretches follow at residues 1–53 (MSDS…QMVD) and 101–250 (KLIQ…ATKK). Over residues 27 to 42 (KKAAATPKSKKSTAAP) the composition is skewed to low complexity. The H15 domain occupies 44–118 (SHPPTQQMVD…GASGSFKLSR (75 aa)). Positions 120-133 (AKKDPKPKASAVEK) are enriched in basic and acidic residues. Low complexity predominate over residues 151–161 (STSTTKKAAGA). Basic and acidic residues predominate over residues 174-191 (KSVEKKRADKAKAKDAKK). Low complexity predominate over residues 192-211 (TGTIKAKPTTAKAKSSATKP). 2 stretches are compositionally biased toward basic residues: residues 212 to 225 (KTPKPKTKSAKPKK) and 235 to 250 (TAVKKPKAKTASATKK).

The protein belongs to the histone H1/H5 family.

It localises to the nucleus. The protein resides in the chromosome. In terms of biological role, histones H1 are necessary for the condensation of nucleosome chains into higher-order structures. The polypeptide is Histone H1.2 (His1.2) (Drosophila virilis (Fruit fly)).